The sequence spans 438 residues: Putative permease HI_0125 (438 aa).

The next 13 membrane-spanning stretches (helical) occupy residues 21 to 41 (IIAGLTTFLAMVYSVIVVPNM), 51 to 71 (SVFIATCLVAGLGSILIGLWA), 73 to 93 (APMAIGCAISLTAFTAFSLVI), 97 to 117 (VAIPVALGAVFLMGVVFTLIS), 137 to 157 (AGIGIGLFLLLIAANGVGLVV), 167 to 187 (LGDFTSFPVMMSLIGLALIIG), 195 to 215 (GGILWVIIAITIVGLIFDPNV), 238 to 258 (FMGALQPAILPVVFALVMTAV), 296 to 316 (LFSGLFGTAPAAVYIESAAGT), 326 to 346 (AIVVGVLFLLMLFFQPLAFLV), 347 to 367 (PGYATAPALMYVGLLMLSNVS), 386 to 406 (FIVLTANIVTGIMLGFAALVI), and 418 to 438 (NVGTVIIAIVLVAFYAGGWAI). Position 315-322 (315-322 (GTAAGGKT)) interacts with ATP.

It belongs to the nucleobase:cation symporter-2 (NCS2) (TC 2.A.40) family. Azg-like subfamily.

It is found in the cell membrane. The sequence is that of Putative permease HI_0125 from Haemophilus influenzae (strain ATCC 51907 / DSM 11121 / KW20 / Rd).